Here is a 277-residue protein sequence, read N- to C-terminus: Glutamate racemase (277 aa).

Residues 9–10 (DS) and 41–42 (YG) each bind substrate. Cys-73 acts as the Proton donor/acceptor in catalysis. Residue 74 to 75 (NT) participates in substrate binding. The active-site Proton donor/acceptor is the Cys-183. 184-185 (TH) contributes to the substrate binding site.

This sequence belongs to the aspartate/glutamate racemases family.

The catalysed reaction is L-glutamate = D-glutamate. It participates in cell wall biogenesis; peptidoglycan biosynthesis. In terms of biological role, provides the (R)-glutamate required for cell wall biosynthesis. This Shewanella denitrificans (strain OS217 / ATCC BAA-1090 / DSM 15013) protein is Glutamate racemase.